The sequence spans 156 residues: Small ribosomal subunit protein uS7 (156 aa).

Belongs to the universal ribosomal protein uS7 family. In terms of assembly, part of the 30S ribosomal subunit. Contacts proteins S9 and S11.

Its function is as follows. One of the primary rRNA binding proteins, it binds directly to 16S rRNA where it nucleates assembly of the head domain of the 30S subunit. Is located at the subunit interface close to the decoding center, probably blocks exit of the E-site tRNA. This is Small ribosomal subunit protein uS7 from Bartonella tribocorum (strain CIP 105476 / IBS 506).